Reading from the N-terminus, the 160-residue chain is Twist-related protein 2 (160 aa).

The segment at 1-63 (MEEGSSSPVS…GSPSAQSFEE (63 aa)) is disordered. A compositionally biased stretch (basic residues) spans 27-37 (KRFGRKRRYSK). The bHLH domain maps to 66–117 (SQRILANVRERQRTQSLNEAFAALRKIIPTLPSDKLSKIQTLKLAARYIDFL).

Efficient DNA binding requires dimerization with another bHLH protein. Forms a heterodimer with TCF3/E12. Also interacts with MEF2C. In terms of tissue distribution, expressed at low levels in sclerotome and dermatome of somites, and in limb buds at 10.5 dpc. Accumulates predominantly in dermatome, prevertebrae and derivatives of branchial arches by 13 dpc. Also expressed near surface of embryo and in chondrogenic cells. In adult, expressed at low levels in skin, bladder, uterus, aorta and heart.

The protein resides in the nucleus. It localises to the cytoplasm. Binds to the E-box consensus sequence 5'-CANNTG-3' as a heterodimer and inhibits transcriptional activation by MYOD1, MYOG, MEF2A and MEF2C. Also represses expression of pro-inflammatory cytokines such as TNFA and IL1B. Involved in postnatal glycogen storage and energy metabolism. Inhibits the premature or ectopic differentiation of preosteoblast cells during osteogenesis, possibly by changing the internal signal transduction response of osteoblasts to external growth factors. The chain is Twist-related protein 2 (Twist2) from Mus musculus (Mouse).